Reading from the N-terminus, the 200-residue chain is MAWTSTLPAHLLNLIKNSKYVHVATCSKDCIPSVALMNYIYVPGEKLFGQTDNKNDYIIFVSPQDTQKFYNIKENPKVALLFHDWIIANNLSVGKESISGTPTPTSIPHEEQRQSELLNLLQELNQAELNQMSASIGGETEIVNPESEESKYYKDLILKANPDAKAFIFEKNTAVVKVRIDNARVSNNENRTMFLSKGKS.

The FMN site is built by F60, K68, and N125.

It belongs to the pyridoxamine 5'-phosphate oxidase family. FMN serves as cofactor.

The protein localises to the cytoplasm. The protein resides in the nucleus. The protein is Pyridoxamine 5'-phosphate oxidase homolog of Saccharomyces cerevisiae (strain ATCC 204508 / S288c) (Baker's yeast).